The primary structure comprises 58 residues: UPF0339 protein MA_3316 (58 aa).

Belongs to the UPF0339 family.

In Methanosarcina acetivorans (strain ATCC 35395 / DSM 2834 / JCM 12185 / C2A), this protein is UPF0339 protein MA_3316.